Reading from the N-terminus, the 482-residue chain is Membrane-bound lytic murein transglycosylase F (482 aa).

Positions 1–18 (MKGLFLRIITALALLFWA) are cleaved as a signal peptide. The interval 19-267 (IDMVFPWQFL…NLKEKYLGHI (249 aa)) is non-LT domain. The segment at 268–482 (SQFDYVDTRS…NLEEIKENED (215 aa)) is LT domain. Residue E312 is part of the active site. A compositionally biased stretch (polar residues) spans 457 to 470 (ENQTTNDNANNESA). Residues 457–482 (ENQTTNDNANNESAVKNLEEIKENED) form a disordered region. Residues 473 to 482 (NLEEIKENED) show a composition bias toward basic and acidic residues.

In the N-terminal section; belongs to the bacterial solute-binding protein 3 family. It in the C-terminal section; belongs to the transglycosylase Slt family.

It localises to the cell outer membrane. It catalyses the reaction Exolytic cleavage of the (1-&gt;4)-beta-glycosidic linkage between N-acetylmuramic acid (MurNAc) and N-acetylglucosamine (GlcNAc) residues in peptidoglycan, from either the reducing or the non-reducing ends of the peptidoglycan chains, with concomitant formation of a 1,6-anhydrobond in the MurNAc residue.. Murein-degrading enzyme that degrades murein glycan strands and insoluble, high-molecular weight murein sacculi, with the concomitant formation of a 1,6-anhydromuramoyl product. Lytic transglycosylases (LTs) play an integral role in the metabolism of the peptidoglycan (PG) sacculus. Their lytic action creates space within the PG sacculus to allow for its expansion as well as for the insertion of various structures such as secretion systems and flagella. In Haemophilus influenzae (strain PittGG), this protein is Membrane-bound lytic murein transglycosylase F.